Reading from the N-terminus, the 453-residue chain is 3-phosphoshikimate 1-carboxyvinyltransferase (453 aa).

Lysine 28, serine 29, and arginine 33 together coordinate 3-phosphoshikimate. Position 28 (lysine 28) interacts with phosphoenolpyruvate. Phosphoenolpyruvate-binding residues include glycine 101 and arginine 129. 3-phosphoshikimate is bound by residues serine 174, glutamine 176, aspartate 326, and lysine 353. A phosphoenolpyruvate-binding site is contributed by glutamine 176. The Proton acceptor role is filled by aspartate 326. The phosphoenolpyruvate site is built by arginine 357 and arginine 405.

It belongs to the EPSP synthase family. As to quaternary structure, monomer.

The protein resides in the cytoplasm. It carries out the reaction 3-phosphoshikimate + phosphoenolpyruvate = 5-O-(1-carboxyvinyl)-3-phosphoshikimate + phosphate. It participates in metabolic intermediate biosynthesis; chorismate biosynthesis; chorismate from D-erythrose 4-phosphate and phosphoenolpyruvate: step 6/7. Functionally, catalyzes the transfer of the enolpyruvyl moiety of phosphoenolpyruvate (PEP) to the 5-hydroxyl of shikimate-3-phosphate (S3P) to produce enolpyruvyl shikimate-3-phosphate and inorganic phosphate. In Zymomonas mobilis subsp. mobilis (strain ATCC 31821 / ZM4 / CP4), this protein is 3-phosphoshikimate 1-carboxyvinyltransferase.